The sequence spans 330 residues: DNA-directed RNA polymerase subunit alpha (330 aa).

The segment at 1-235 (MVREKVKVST…DLFIHFLHAK (235 aa)) is alpha N-terminal domain (alpha-NTD). Residues 270-330 (IALKYIFIDQ…KQILGILEKK (61 aa)) are alpha C-terminal domain (alpha-CTD).

Belongs to the RNA polymerase alpha chain family. In terms of assembly, in plastids the minimal PEP RNA polymerase catalytic core is composed of four subunits: alpha, beta, beta', and beta''. When a (nuclear-encoded) sigma factor is associated with the core the holoenzyme is formed, which can initiate transcription.

Its subcellular location is the plastid. It localises to the chloroplast. The catalysed reaction is RNA(n) + a ribonucleoside 5'-triphosphate = RNA(n+1) + diphosphate. In terms of biological role, DNA-dependent RNA polymerase catalyzes the transcription of DNA into RNA using the four ribonucleoside triphosphates as substrates. The protein is DNA-directed RNA polymerase subunit alpha (rpoA) of Gossypium barbadense (Sea Island cotton).